Here is a 353-residue protein sequence, read N- to C-terminus: DNA-directed RNA polymerase subunit alpha (353 aa).

Positions 1 to 234 (MVREKVTVST…DLFIPFLHTE (234 aa)) are alpha N-terminal domain (alpha-NTD). The tract at residues 267-353 (KRALKSIFID…LAQLIDSKSG (87 aa)) is alpha C-terminal domain (alpha-CTD).

This sequence belongs to the RNA polymerase alpha chain family. In plastids the minimal PEP RNA polymerase catalytic core is composed of four subunits: alpha, beta, beta', and beta''. When a (nuclear-encoded) sigma factor is associated with the core the holoenzyme is formed, which can initiate transcription.

Its subcellular location is the plastid. It is found in the chloroplast. The enzyme catalyses RNA(n) + a ribonucleoside 5'-triphosphate = RNA(n+1) + diphosphate. DNA-dependent RNA polymerase catalyzes the transcription of DNA into RNA using the four ribonucleoside triphosphates as substrates. The chain is DNA-directed RNA polymerase subunit alpha from Daucus carota (Wild carrot).